The following is a 291-amino-acid chain: ATP synthase gamma chain (291 aa).

Belongs to the ATPase gamma chain family. In terms of assembly, F-type ATPases have 2 components, CF(1) - the catalytic core - and CF(0) - the membrane proton channel. CF(1) has five subunits: alpha(3), beta(3), gamma(1), delta(1), epsilon(1). CF(0) has three main subunits: a, b and c.

The protein localises to the cell membrane. Produces ATP from ADP in the presence of a proton gradient across the membrane. The gamma chain is believed to be important in regulating ATPase activity and the flow of protons through the CF(0) complex. The chain is ATP synthase gamma chain from Streptococcus equinus (Streptococcus bovis).